An 80-amino-acid chain; its full sequence is Conotoxin Cl11.2 (80 aa).

A signal peptide spans 1 to 19 (MKMSVTFLLILMILPLFTG). The propeptide occupies 20–41 (EWQSGSRLSALKKRLLEKRLLQ). Cystine bridges form between C45–C59, C52–C63, C58–C68, and C62–C74.

It belongs to the conotoxin I1 superfamily. In terms of tissue distribution, expressed by the venom duct.

It localises to the secreted. This Californiconus californicus (California cone) protein is Conotoxin Cl11.2.